The primary structure comprises 897 residues: High molecular weight rhoptry protein 3 (897 aa).

The signal sequence occupies residues 1–24 (MRSKHLVTLFIITFLSFSTVKVWG). 5 disulfide bridges follow: Cys157–Cys231, Cys244–Cys253, Cys262–Cys276, Cys421–Cys620, and Cys475–Cys536. A helical membrane pass occupies residues 597–615 (FVLYFISIISVLYINEYYY). 2 disordered regions span residues 788–845 (KEQS…SNLK) and 859–897 (QLDK…ENEL). Residues 792 to 801 (KSTSAASTSD) are compositionally biased toward polar residues. Residues 802–817 (EISGSEGPSTESTSTG) are compositionally biased toward low complexity. Ser804 is modified (phosphoserine; by CDPK1). Residues 820-832 (GEDKTTDNTYKEM) are compositionally biased toward basic and acidic residues. Residues 865 to 876 (PKKKKSKRKKKR) are compositionally biased toward basic residues. The segment covering 877-889 (DSSSDRILLEESK) has biased composition (basic and acidic residues).

In terms of assembly, component of the RhopH complex. RhopH complex is composed of CLAG3.1/CLAG3.2, RhopH2 and RhopH3 with a 1:1:1 subunit stoichiometry. Interacts with CLAG3.1/CLAG3.2. Interacts with CDPK1; the interaction promotes RhopH3 phosphorylation in merozoites. Proteolytically cleaved near C-terminus.

The protein resides in the host cell membrane. Its subcellular location is the parasitophorous vacuole membrane. It is found in the cytoplasm. The protein localises to the cytoplasmic vesicle. It localises to the secretory vesicle. The protein resides in the rhoptry. Functionally, participates in the formation of new permeability pathways in Plasmodium-infected erythrocytes enabling the uptake of nutrients from the blood plasma. Required for maintaining invasion capacity of merozoites. Required for the trophozoite to schizont developmental transition of the intracellular parasite. The protein is High molecular weight rhoptry protein 3 of Plasmodium falciparum (isolate 3D7).